Here is a 401-residue protein sequence, read N- to C-terminus: Imidazolonepropionase (401 aa).

Fe(3+)-binding residues include H70 and H72. Zn(2+) contacts are provided by H70 and H72. R79, Y142, and H175 together coordinate 4-imidazolone-5-propanoate. Y142 provides a ligand contact to N-formimidoyl-L-glutamate. H238 contacts Fe(3+). A Zn(2+)-binding site is contributed by H238. Q241 contributes to the 4-imidazolone-5-propanoate binding site. Residue D313 participates in Fe(3+) binding. Position 313 (D313) interacts with Zn(2+). N-formimidoyl-L-glutamate-binding residues include N315 and G317. 4-imidazolone-5-propanoate is bound at residue T318.

It belongs to the metallo-dependent hydrolases superfamily. HutI family. The cofactor is Zn(2+). It depends on Fe(3+) as a cofactor.

The protein resides in the cytoplasm. It catalyses the reaction 4-imidazolone-5-propanoate + H2O = N-formimidoyl-L-glutamate. It participates in amino-acid degradation; L-histidine degradation into L-glutamate; N-formimidoyl-L-glutamate from L-histidine: step 3/3. Functionally, catalyzes the hydrolytic cleavage of the carbon-nitrogen bond in imidazolone-5-propanoate to yield N-formimidoyl-L-glutamate. It is the third step in the universal histidine degradation pathway. The polypeptide is Imidazolonepropionase (Xanthomonas euvesicatoria pv. vesicatoria (strain 85-10) (Xanthomonas campestris pv. vesicatoria)).